Here is a 645-residue protein sequence, read N- to C-terminus: Sentrin-specific protease 1 (645 aa).

Residues 1–200 form an interaction with CCAR2 region; that stretch reads MDDIADRMRM…REIYRQLLQM (200 aa). Phosphoserine occurs at positions 57, 117, and 157. Residues 92–117 are disordered; sequence QSANGQWRNSTPSSSSSLQKSRNSRS. Residues 99 to 117 are compositionally biased toward low complexity; sequence RNSTPSSSSSLQKSRNSRS. Positions 171-177 match the Nuclear localization signal motif; it reads PKKTQRR. The segment at 285 to 313 is disordered; the sequence is KDSGTLHHPHHHHSVPHQPDNLAASNTQS. Protease regions lie at residues 451–614 and 451–615; these read LTIT…YADC and LTIT…ADCI. Residues H534 and D551 contribute to the active site. The short motif at 575–578 is the Nuclear localization signal element; sequence KKRK. Catalysis depends on C604, which acts as the Nucleophile. Positions 629 to 635 match the Nuclear localization signal motif; that stretch reads PYFRKRM. The Nuclear export signal signature appears at 636–645; sequence VWEILHRKLL.

It belongs to the peptidase C48 family. As to quaternary structure, interacts with RBM33; promoting ALKBH5 desumoylation and subsequent activation.

It is found in the nucleus. It localises to the cytoplasm. Its function is as follows. Protease that catalyzes two essential functions in the SUMO pathway. The first is the hydrolysis of an alpha-linked peptide bond at the C-terminal end of the small ubiquitin-like modifier (SUMO) propeptides, SUMO1, SUMO2 and SUMO3 leading to the mature form of the proteins. The second is the deconjugation of SUMO1, SUMO2 and SUMO3 from targeted proteins, by cleaving an epsilon-linked peptide bond between the C-terminal glycine of the mature SUMO and the lysine epsilon-amino group of the target protein. Deconjugates SUMO1 from HIPK2. Deconjugates SUMO1 from HDAC1 and BHLHE40/DEC1, which decreases its transcriptional repression activity. Deconjugates SUMO1 from CLOCK, which decreases its transcriptional activation activity. Deconjugates SUMO2 from MTA1. Inhibits N(6)-methyladenosine (m6A) RNA methylation by mediating SUMO1 deconjugation from METTL3 and ALKBH5: METTL3 inhibits the m6A RNA methyltransferase activity, while ALKBH5 desumoylation promotes m6A demethylation. Desumoylates CCAR2 which decreases its interaction with SIRT1. Deconjugates SUMO1 from GPS2. This Pongo abelii (Sumatran orangutan) protein is Sentrin-specific protease 1 (SENP1).